A 59-amino-acid chain; its full sequence is Large ribosomal subunit protein uL30 (59 aa).

Belongs to the universal ribosomal protein uL30 family. As to quaternary structure, part of the 50S ribosomal subunit.

The polypeptide is Large ribosomal subunit protein uL30 (Shewanella amazonensis (strain ATCC BAA-1098 / SB2B)).